Here is a 221-residue protein sequence, read N- to C-terminus: Glutathione S-transferase alpha-3 (221 aa).

The region spanning 3–83 (GKPVLHYFDG…YIATKYNLYG (81 aa)) is the GST N-terminal domain. Residue K4 is modified to N6-succinyllysine. Residues Y9, R45, 54-55 (QV), and 67-68 (QT) contribute to the glutathione site. A GST C-terminal domain is found at 85–207 (DMKERALIDM…LQPGSQRKPL (123 aa)).

This sequence belongs to the GST superfamily. Alpha family. Heterodimer of YC1 and YC2.

It is found in the cytoplasm. The catalysed reaction is RX + glutathione = an S-substituted glutathione + a halide anion + H(+). It catalyses the reaction androst-5-ene-3,17-dione = androst-4-ene-3,17-dione. The enzyme catalyses pregn-5-ene-3,20-dione = progesterone. In terms of biological role, conjugation of reduced glutathione to a wide number of exogenous and endogenous hydrophobic electrophiles. Catalyzes isomerization reactions that contribute to the biosynthesis of steroid hormones. Efficiently catalyze obligatory double-bond isomerizations of delta(5)-androstene-3,17-dione and delta(5)-pregnene-3,20-dione, precursors to testosterone and progesterone, respectively. Has substantial activity toward aflatoxin B1-8,9-epoxide. This is Glutathione S-transferase alpha-3 from Rattus norvegicus (Rat).